The following is a 116-amino-acid chain: Immunoglobulin heavy variable 3-13 (116 aa).

The signal sequence occupies residues 1–19; the sequence is MELGLSWVFLVAILEGVQC. The interval 20 to 44 is framework-1; sequence EVQLVESGGGLVQPGGSLRLSCAAS. The Ig-like domain maps to 20–116; that stretch reads EVQLVESGGG…GDTAVYYCAR (97 aa). An intrachain disulfide couples C41 to C114. Residues 45-52 form a complementarity-determining-1 region; sequence GFTFSSYD. A framework-2 region spans residues 53–69; that stretch reads MHWVRQATGKGLEWVSA. Residues 70–76 form a complementarity-determining-2 region; the sequence is IGTAGDP. The interval 77–114 is framework-3; the sequence is YYPGSVKGRFTISRENAKNSLYLQMNSLRAGDTAVYYC. The interval 115-116 is complementarity-determining-3; sequence AR.

Immunoglobulins are composed of two identical heavy chains and two identical light chains; disulfide-linked.

It is found in the secreted. The protein localises to the cell membrane. V region of the variable domain of immunoglobulin heavy chains that participates in the antigen recognition. Immunoglobulins, also known as antibodies, are membrane-bound or secreted glycoproteins produced by B lymphocytes. In the recognition phase of humoral immunity, the membrane-bound immunoglobulins serve as receptors which, upon binding of a specific antigen, trigger the clonal expansion and differentiation of B lymphocytes into immunoglobulins-secreting plasma cells. Secreted immunoglobulins mediate the effector phase of humoral immunity, which results in the elimination of bound antigens. The antigen binding site is formed by the variable domain of one heavy chain, together with that of its associated light chain. Thus, each immunoglobulin has two antigen binding sites with remarkable affinity for a particular antigen. The variable domains are assembled by a process called V-(D)-J rearrangement and can then be subjected to somatic hypermutations which, after exposure to antigen and selection, allow affinity maturation for a particular antigen. The sequence is that of Immunoglobulin heavy variable 3-13 from Homo sapiens (Human).